A 208-amino-acid chain; its full sequence is Protein-L-isoaspartate O-methyltransferase (208 aa).

The active site involves Ser59.

This sequence belongs to the methyltransferase superfamily. L-isoaspartyl/D-aspartyl protein methyltransferase family.

It localises to the cytoplasm. The catalysed reaction is [protein]-L-isoaspartate + S-adenosyl-L-methionine = [protein]-L-isoaspartate alpha-methyl ester + S-adenosyl-L-homocysteine. Catalyzes the methyl esterification of L-isoaspartyl residues in peptides and proteins that result from spontaneous decomposition of normal L-aspartyl and L-asparaginyl residues. It plays a role in the repair and/or degradation of damaged proteins. The sequence is that of Protein-L-isoaspartate O-methyltransferase from Vibrio vulnificus (strain CMCP6).